We begin with the raw amino-acid sequence, 247 residues long: Probable transcriptional regulatory protein Hhal_2210 (247 aa).

The protein belongs to the TACO1 family.

The protein localises to the cytoplasm. The chain is Probable transcriptional regulatory protein Hhal_2210 from Halorhodospira halophila (strain DSM 244 / SL1) (Ectothiorhodospira halophila (strain DSM 244 / SL1)).